Reading from the N-terminus, the 144-residue chain is ATP synthase subunit 9, mitochondrial (144 aa).

A mitochondrion-targeting transit peptide spans 1–63 (MASTRVLASR…ATRQITQKRA (63 aa)). The next 2 membrane-spanning stretches (helical) occupy residues 83–103 (TAAI…AALL) and 120–140 (AILG…VALM).

This sequence belongs to the ATPase C chain family. F-type ATPases have 2 components, CF(1) - the catalytic core - and CF(0) - the membrane proton channel. CF(1) has five subunits: alpha(3), beta(3), gamma(1), delta(1), epsilon(1). CF(0) has three main subunits: a, b and c.

It localises to the mitochondrion membrane. In terms of biological role, mitochondrial membrane ATP synthase (F(1)F(0) ATP synthase or Complex V) produces ATP from ADP in the presence of a proton gradient across the membrane which is generated by electron transport complexes of the respiratory chain. F-type ATPases consist of two structural domains, F(1) - containing the extramembraneous catalytic core and F(0) - containing the membrane proton channel, linked together by a central stalk and a peripheral stalk. During catalysis, ATP synthesis in the catalytic domain of F(1) is coupled via a rotary mechanism of the central stalk subunits to proton translocation. Part of the complex F(0) domain. A homomeric c-ring of probably 10 subunits is part of the complex rotary element. This chain is ATP synthase subunit 9, mitochondrial (ATP9), found in Podospora anserina (Pleurage anserina).